Reading from the N-terminus, the 186-residue chain is Peptidyl-tRNA hydrolase (186 aa).

Tyr-14 serves as a coordination point for tRNA. Residue His-19 is the Proton acceptor of the active site. Residues Phe-64, Asn-66, and Asn-112 each contribute to the tRNA site.

This sequence belongs to the PTH family. As to quaternary structure, monomer.

The protein localises to the cytoplasm. The catalysed reaction is an N-acyl-L-alpha-aminoacyl-tRNA + H2O = an N-acyl-L-amino acid + a tRNA + H(+). Functionally, hydrolyzes ribosome-free peptidyl-tRNAs (with 1 or more amino acids incorporated), which drop off the ribosome during protein synthesis, or as a result of ribosome stalling. In terms of biological role, catalyzes the release of premature peptidyl moieties from peptidyl-tRNA molecules trapped in stalled 50S ribosomal subunits, and thus maintains levels of free tRNAs and 50S ribosomes. This is Peptidyl-tRNA hydrolase from Mycoplasma mycoides subsp. mycoides SC (strain CCUG 32753 / NCTC 10114 / PG1).